A 204-amino-acid chain; its full sequence is Somatotropin (204 aa).

The N-terminal stretch at 1-17 (MDRVVLMLSVLSLGVSS) is a signal peptide. Gln-18 carries the post-translational modification Pyrrolidone carboxylic acid. His-36 lines the Zn(2+) pocket. A disulfide bond links Cys-69 and Cys-177. Glu-186 lines the Zn(2+) pocket. An intrachain disulfide couples Cys-194 to Cys-202.

Belongs to the somatotropin/prolactin family.

The protein resides in the secreted. Functionally, growth hormone plays an important role in growth control and is involved in the regulation of several anabolic processes. Implicated as an osmoregulatory substance important for seawater adaptation. The sequence is that of Somatotropin (gh) from Acanthopagrus latus (Yellowfin seabream).